The following is a 237-amino-acid chain: MPVKKKRKSPGVAAAVAEDGGLKKCKISSYCRSQPPARLISGEEHFSSKKCLAWFYEYAGPDEVVGPEGMEKFCEDIGVEPENIIMLVLAWKLEAESMGFFTKEEWLKGMTSLQCDCTEKLQNKFDFLRSQLNDISSFKNIYRYAFDFARDKDQRSLDIDTAKSMLALLLGRTWPLFSVFYQYPEQSKYRVMNKDQWYNVLEFSRAVHADLSNYDEDGAWPVLLDEFVEWQKVRQTS.

3 positions are modified to phosphoserine: S9, S41, and S48. A DCUN1 domain is found at 46–232 (FSSKKCLAWF…LLDEFVEWQK (187 aa)).

As to quaternary structure, part of a complex that contains DCUN1D5, CUL1 and RBX1; this interaction is bridged by CUL1. Interacts (via the DCUN1 domain) with the unneddylated cullins: interacts with CUL1, CUL2, CUL3, CUL4A, CUL4B and CUL5; these interactions promote the cullin neddylation and the identity of the cullin dictates the affinity of the interaction. Interacts (via DCUN1 domain) with UBE2M (N-terminally acetylated form) and probably with UBE2F (N-terminally acetylated form). May also interact with regulators or subunits of cullin-RING ligases such as RBX1, RNF7, ELOB and DDB1; these interactions are bridged by cullins. Interacts with CAND1; this interaction is bridged by cullins and strongly inhibits the neddylation of cullins. These CAND-cullin-DCNL complexes can only be neddylated in the presence of a substrate adapter. In terms of processing, phosphorylation at Ser-41 is independent of cullin's interaction. Phosphorylated in response to both TICAM1 and MYD88 dependent Toll-like receptor (TLR) pathway activation. Phosphorylated in response to IL1B stimulation.

It is found in the nucleus. The protein localises to the cytoplasm. The protein resides in the cytoskeleton. It localises to the spindle. In terms of biological role, contributes to the neddylation of all cullins by transferring NEDD8 from N-terminally acetylated NEDD8-conjugating E2s enzyme to different cullin C-terminal domain-RBX complexes which is necessary for the activation of cullin-RING E3 ubiquitin ligases (CRLs). May play a role in DNA damage response and may participate in cell proliferation and anchorage-independent cell growth. The sequence is that of DCN1-like protein 5 from Pongo abelii (Sumatran orangutan).